The primary structure comprises 380 residues: 3-isopropylmalate dehydratase large subunit (380 aa).

Residues C262, C320, and C323 each contribute to the [4Fe-4S] cluster site.

Belongs to the aconitase/IPM isomerase family. LeuC type 2 subfamily. Heterodimer of LeuC and LeuD. It depends on [4Fe-4S] cluster as a cofactor.

The catalysed reaction is (2R,3S)-3-isopropylmalate = (2S)-2-isopropylmalate. It functions in the pathway amino-acid biosynthesis; L-leucine biosynthesis; L-leucine from 3-methyl-2-oxobutanoate: step 2/4. Its function is as follows. Catalyzes the isomerization between 2-isopropylmalate and 3-isopropylmalate, via the formation of 2-isopropylmaleate. This Thermococcus kodakarensis (strain ATCC BAA-918 / JCM 12380 / KOD1) (Pyrococcus kodakaraensis (strain KOD1)) protein is 3-isopropylmalate dehydratase large subunit.